The chain runs to 147 residues: UPF0178 protein Patl_1318 (147 aa).

This sequence belongs to the UPF0178 family.

This Pseudoalteromonas atlantica (strain T6c / ATCC BAA-1087) protein is UPF0178 protein Patl_1318.